Here is a 361-residue protein sequence, read N- to C-terminus: Outer mitochondrial transmembrane helix translocase (361 aa).

The Mitochondrial intermembrane segment spans residues 1–15; sequence MVHAEAFSRPLSRNE. A helical transmembrane segment spans residues 16–32; it reads VVGLIFRLTIFGAVTYF. The Cytoplasmic portion of the chain corresponds to 33-361; that stretch reads TIKWMVDAID…QNVLTHVCLD (329 aa). 133–140 contributes to the ATP binding site; sequence GPPGCGKT. The residue at position 322 (S322) is a Phosphoserine.

Belongs to the AAA ATPase family. MSP1 subfamily. Interacts with GRIA2 and GRIP1 in an ATP-dependent manner. ATAD1-catalyzed ATP hydrolysis disrupts not only its binding to GRIA2 and GRIP1, but also interaction between GRIP1 and GRIA2, leading to AMPAR complex disassembly.

The protein localises to the mitochondrion outer membrane. It localises to the peroxisome membrane. The protein resides in the postsynaptic cell membrane. The catalysed reaction is [protein]-with a C-terminal TM segment(out) + ATP + H2O = [protein]-with a C-terminal TM segment(in) + ADP + phosphate + H(+). Its function is as follows. Outer mitochondrial translocase required to remove mislocalized tail-anchored transmembrane proteins on mitochondria. Specifically recognizes and binds tail-anchored transmembrane proteins: acts as a dislocase that mediates the ATP-dependent extraction of mistargeted tail-anchored transmembrane proteins from the mitochondrion outer membrane. Also plays a critical role in regulating the surface expression of AMPA receptors (AMPAR), thereby regulating synaptic plasticity and learning and memory. Required for NMDA-stimulated AMPAR internalization and inhibition of GRIA1 and GRIA2 recycling back to the plasma membrane; these activities are ATPase-dependent. The chain is Outer mitochondrial transmembrane helix translocase from Homo sapiens (Human).